Consider the following 310-residue polypeptide: 17-beta-hydroxysteroid dehydrogenase type 3 (310 aa).

Residue 48–77 participates in NADP(+) binding; it reads GQWAVITGAGDGIGKAYSFELAKRGLNVVL. A substrate-binding site is contributed by S185. Y198 functions as the Proton acceptor in the catalytic mechanism.

This sequence belongs to the short-chain dehydrogenases/reductases (SDR) family. 17-beta-HSD 3 subfamily. Testis.

Its subcellular location is the endoplasmic reticulum. It catalyses the reaction a 17beta-hydroxy steroid + NADP(+) = a 17-oxo steroid + NADPH + H(+). The enzyme catalyses testosterone + NADP(+) = androst-4-ene-3,17-dione + NADPH + H(+). The catalysed reaction is 17beta-estradiol + NADP(+) = estrone + NADPH + H(+). It carries out the reaction 3beta-hydroxyandrost-5-en-17-one + NADPH + H(+) = androst-5-en-3beta,17beta-diol + NADP(+). It catalyses the reaction 17beta-hydroxy-5alpha-androstan-3-one + NADP(+) = 5alpha-androstan-3,17-dione + NADPH + H(+). The enzyme catalyses androsterone + NADPH + H(+) = 5alpha-androstane-3alpha,17beta-diol + NADP(+). The catalysed reaction is 3beta-hydroxy-5alpha-androstan-17-one + NADPH + H(+) = 5alpha-androstane-3beta,17beta-diol + NADP(+). It carries out the reaction androst-4-ene-3,11,17-trione + NADPH + H(+) = 17beta-hydroxyandrost-4-ene-3,11-dione + NADP(+). It catalyses the reaction 11beta-hydroxyandrost-4-ene-3,17-dione + NADPH + H(+) = 11beta,17beta-dihydroxyandrost-4-ene-3-one + NADP(+). It functions in the pathway hormone biosynthesis; testosterone biosynthesis. The protein operates within steroid metabolism. Catalyzes the conversion of 17-oxosteroids to 17beta-hydroxysteroids. Favors the reduction of androstenedione to testosterone. Testosterone is the key androgen driving male development and function. Uses NADPH while the two other EDH17B enzymes use NADH. Androgens such as epiandrosterone, dehydroepiandrosterone, androsterone and androstanedione are accepted as substrates and reduced at C-17. Can reduce 11-ketoandrostenedione as well as 11beta-hydroxyandrostenedione at C-17 to the respective testosterone forms. This is 17-beta-hydroxysteroid dehydrogenase type 3 from Homo sapiens (Human).